The following is a 445-amino-acid chain: Gamma-glutamyl phosphate reductase (445 aa).

Belongs to the gamma-glutamyl phosphate reductase family.

Its subcellular location is the cytoplasm. It carries out the reaction L-glutamate 5-semialdehyde + phosphate + NADP(+) = L-glutamyl 5-phosphate + NADPH + H(+). It functions in the pathway amino-acid biosynthesis; L-proline biosynthesis; L-glutamate 5-semialdehyde from L-glutamate: step 2/2. Its function is as follows. Catalyzes the NADPH-dependent reduction of L-glutamate 5-phosphate into L-glutamate 5-semialdehyde and phosphate. The product spontaneously undergoes cyclization to form 1-pyrroline-5-carboxylate. This chain is Gamma-glutamyl phosphate reductase, found in Synechococcus sp. (strain RCC307).